Consider the following 293-residue polypeptide: uncharacterized protein (293 aa).

Disordered stretches follow at residues 121–154 and 254–274; these read NLNF…SQNS and DILQ…PQQQ. Residues 133–149 are compositionally biased toward basic residues; it reads SYHHHSHSHSHHSHSHS. Over residues 260 to 272 the composition is skewed to pro residues; sequence PPSPTPTPPPPPQ.

This is an uncharacterized protein from Dictyostelium discoideum (Social amoeba).